Consider the following 451-residue polypeptide: tRNA modification GTPase MnmE (451 aa).

The (6S)-5-formyl-5,6,7,8-tetrahydrofolate site is built by R28, E85, and K124. Residues 220-373 (GLYTVLVGPP…LKTRLRTLLL (154 aa)) form the TrmE-type G domain. N230 is a binding site for K(+). Residues 230–235 (NVGKSS), 249–255 (TDVPGTT), and 274–277 (DTAG) each bind GTP. Residue S234 participates in Mg(2+) binding. The K(+) site is built by T249, V251, and T254. A Mg(2+)-binding site is contributed by T255. K451 is a binding site for (6S)-5-formyl-5,6,7,8-tetrahydrofolate.

This sequence belongs to the TRAFAC class TrmE-Era-EngA-EngB-Septin-like GTPase superfamily. TrmE GTPase family. Homodimer. Heterotetramer of two MnmE and two MnmG subunits. It depends on K(+) as a cofactor.

Its subcellular location is the cytoplasm. Exhibits a very high intrinsic GTPase hydrolysis rate. Involved in the addition of a carboxymethylaminomethyl (cmnm) group at the wobble position (U34) of certain tRNAs, forming tRNA-cmnm(5)s(2)U34. The protein is tRNA modification GTPase MnmE of Xylella fastidiosa (strain Temecula1 / ATCC 700964).